The sequence spans 310 residues: Probable manganese-dependent inorganic pyrophosphatase (310 aa).

Residues His9, Asp13, Asp15, Asp75, His97, and Asp149 each contribute to the Mn(2+) site.

The protein belongs to the PPase class C family. The cofactor is Mn(2+).

It localises to the cytoplasm. The catalysed reaction is diphosphate + H2O = 2 phosphate + H(+). This Bacillus cytotoxicus (strain DSM 22905 / CIP 110041 / 391-98 / NVH 391-98) protein is Probable manganese-dependent inorganic pyrophosphatase.